Consider the following 459-residue polypeptide: uncharacterized protein (459 aa).

One can recognise a B12-binding domain in the interval 13–145; it reads TESAIKRVVG…DALSKGRELK (133 aa). The region spanning 188–402 is the Radical SAM core domain; that stretch reads ADGVPFGVVM…MNWRKYTTID (215 aa). Residues Cys-202, Cys-206, and Cys-209 each contribute to the [4Fe-4S] cluster site.

It belongs to the methyltransferase superfamily. The cofactor is [4Fe-4S] cluster.

This is an uncharacterized protein from Pyrococcus horikoshii (strain ATCC 700860 / DSM 12428 / JCM 9974 / NBRC 100139 / OT-3).